Here is a 301-residue protein sequence, read N- to C-terminus: MEKFFSPSRHNYADLSPTDVPASEESDEALEEKQFEYFQQRQHRRLVLVNRLLAASTVALVMVSLWLGWELHTAKFGSMGSFQYGFKYELEAAKKVIKLEEYKFLGSPIFLDDGTELVPEPTPGPMKTLGVTDMYVGEPSKELDWNWNQLHWGRFFLLTEDEARQAWGPGYKEYWAENEGGYIAGLEVTHSVHCVDMLRKALRRDVYPLDSPLHGPIHTDHCLNHLRQMILCQGDLTPIPSKYYRGITDNYIFGDMPHTCRNWDSVREFITDRFNGSSAVPLAPGTVLSDPYKKLLGILDE.

The interval 1–26 is disordered; the sequence is MEKFFSPSRHNYADLSPTDVPASEES. The chain crosses the membrane as a helical span at residues 47-69; sequence VLVNRLLAASTVALVMVSLWLGW. Short sequence motifs (HXXHC) lie at residues 189–194 and 218–222; these read THSVHC and HTDHC. Asn-275 carries an N-linked (GlcNAc...) asparagine glycan.

This sequence belongs to the ustYa family.

It is found in the membrane. Its pathway is mycotoxin biosynthesis. Its function is as follows. UstYa family oxidase; part of the gene cluster that mediates the biosynthesis of the phomopsins, a group of hexapeptide mycotoxins which infects lupins and causes lupinosis disease in livestock. Within the pathway, phomYd catalyzes the desaturation of the Asp moiety into 2,3-dehydroaspartic acid (dAsp). The pathway starts with the processing of the precursor phomA by several endopeptidases including kexin proteases as well as the cluster-specific S41 family peptidase phomP1 and the oligopeptidase phomG to produce 10 identical copies of the hexapeptide Tyr-Val-Ile-Pro-Ile-Asp. After being excised from the precursor peptide, the core peptides are cyclized and modified post-translationally by enzymes encoded within the gene cluster. The timing and order of proteolysis of the phomA precursor and PTMs are still unknown. Two tyrosinase-like enzymes, phomQ1 and phomQ2, catalyze the chlorination and hydroxylation of Tyr, respectively. PhomYb, is proposed to be involved in the construction of the macrocyclic structure. The other 4 ustYa family proteins may be involved in PTMs that generate the unique structure of phomopsin A. PhomYa is required for the hydroxylation of C-beta of Tyr. PhomYc, phomYd, and phomYe are responsible for the biosynthesis of 2,3-dehydroisoleucine (dIle), 2,3-dehydroaspartic acid (dAsp), and 3,4-dehydroproline (dPro), respectively. While dIle formation by phomYc is indispensable for the installation of dAsp by phomYd, the order of the other PTMs have not been elucidated yet. Most of the biosynthetic enzymes likely have broad substrate specificity, and thus, there might be a metabolic grid from a precursor to phomopsin A. The enzyme(s) responsible for the biosynthesis of 3,4-dehydrovaline (dVal) have also not been identified yet. Finally, phomM acts as an S-adenosylmethionine-dependent alpha-N-methyltransferase that catalyzes two successive N-methylation reactions, converting N-desmethyl-phomopsin A to phomopsin A and phomopsin A further to an N,N-dimethylated congener called phomopsin E. The polypeptide is UstYa family oxidase phomYd (Diaporthe leptostromiformis (Lupinosis disease fungus)).